Consider the following 709-residue polypeptide: Ral guanine nucleotide dissociation stimulator-like 3 (709 aa).

Positions 26 to 55 (VYSVSLRRQRSQRSTPERSGEGQTPIPATD) are disordered. The region spanning 64-201 (KVRALRAARL…LLEDFLKEAK (138 aa)) is the N-terminal Ras-GEF domain. Disordered stretches follow at residues 203–225 (EQTEEEKRLAWSGPPRIAQTPGS), 395–416 (SQEETTEDDDCPSGSLPSKLPP), and 502–604 (PPAA…SRVP). One can recognise a Ras-GEF domain in the interval 248 to 503 (SVDDVAEQLT…YRVSRVIEPP (256 aa)). Low complexity-rich tracts occupy residues 502-511 (PPAASCPSSP) and 533-551 (SSPGGSPGDPSSPTSSVSP). Phosphoserine occurs at positions 506 and 510. The span at 552 to 576 (GSPPSSPRNREPPPPGSPPASPGPQ) shows a compositional bias: pro residues. Phosphoserine occurs at positions 553, 568, 572, 577, and 600. The segment at 611–706 (SEARVIRVSI…KEGTGHTLSA (96 aa)) is interaction with HRAS, MRAS and RIT1. Residues 612–699 (EARVIRVSIN…GDFLLRRKEG (88 aa)) form the Ras-associating domain.

In terms of assembly, interacts with GTP-bound forms of RIT1, HRAS and MRAS. Widely expressed. Expressed at high levels in the liver and kidney.

Functionally, guanine nucleotide exchange factor (GEF) for Ral-A. Potential effector of GTPase HRas and Ras-related protein M-Ras. Negatively regulates Elk-1-dependent gene induction downstream of HRas and MEKK1. The protein is Ral guanine nucleotide dissociation stimulator-like 3 (Rgl3) of Mus musculus (Mouse).